The chain runs to 622 residues: Apical membrane antigen 1 (622 aa).

An N-terminal signal peptide occupies residues 1–24; sequence MRKLYCVLLLSAFEFTYMINFGRG. Topologically, residues 25–546 are extracellular; the sequence is QNYWEHPYQN…EHKPTYDNMK (522 aa). 5 disulfide bridges follow: cysteine 149-cysteine 302, cysteine 217-cysteine 247, cysteine 263-cysteine 275, cysteine 320-cysteine 418, and cysteine 337-cysteine 409. Asparagine 286, asparagine 371, asparagine 421, asparagine 422, and asparagine 499 each carry an N-linked (GlcNAc...) asparagine glycan. 3 disulfides stabilise this stretch: cysteine 443–cysteine 502, cysteine 490–cysteine 507, and cysteine 492–cysteine 509. A helical membrane pass occupies residues 547–567; that stretch reads IIIASSAAVAVLATILMVYLY. At 568-622 the chain is on the cytoplasmic side; that stretch reads KRKGNAEKYDKMDEPQDYGKSTSRNDEMLDPEASFWGEEKRASHTTPVLMEKPYY. The disordered stretch occupies residues 577-607; the sequence is DKMDEPQDYGKSTSRNDEMLDPEASFWGEEK.

The protein belongs to the apicomplexan parasites AMA1 family.

It is found in the membrane. Its function is as follows. Involved in parasite invasion of erythrocytes. In Plasmodium falciparum (isolate thtn / Thailand), this protein is Apical membrane antigen 1 (AMA-1).